The chain runs to 127 residues: Holo-[acyl-carrier-protein] synthase (127 aa).

Residues D8 and E57 each contribute to the Mg(2+) site.

The protein belongs to the P-Pant transferase superfamily. AcpS family. Mg(2+) serves as cofactor.

The protein resides in the cytoplasm. It carries out the reaction apo-[ACP] + CoA = holo-[ACP] + adenosine 3',5'-bisphosphate + H(+). Its function is as follows. Transfers the 4'-phosphopantetheine moiety from coenzyme A to a Ser of acyl-carrier-protein. The sequence is that of Holo-[acyl-carrier-protein] synthase from Hydrogenovibrio crunogenus (strain DSM 25203 / XCL-2) (Thiomicrospira crunogena).